We begin with the raw amino-acid sequence, 281 residues long: Pantothenate synthetase (281 aa).

30–37 (MGNLHQGH) is a binding site for ATP. Residue His-37 is the Proton donor of the active site. A (R)-pantoate-binding site is contributed by Gln-61. Residue Gln-61 coordinates beta-alanine. 149–152 (GNKD) serves as a coordination point for ATP. (R)-pantoate is bound at residue Gln-155. ATP-binding positions include Ile-178 and 186–189 (MSSR).

The protein belongs to the pantothenate synthetase family. In terms of assembly, homodimer.

Its subcellular location is the cytoplasm. The catalysed reaction is (R)-pantoate + beta-alanine + ATP = (R)-pantothenate + AMP + diphosphate + H(+). Its pathway is cofactor biosynthesis; (R)-pantothenate biosynthesis; (R)-pantothenate from (R)-pantoate and beta-alanine: step 1/1. Catalyzes the condensation of pantoate with beta-alanine in an ATP-dependent reaction via a pantoyl-adenylate intermediate. This Shewanella baltica (strain OS155 / ATCC BAA-1091) protein is Pantothenate synthetase.